Here is a 332-residue protein sequence, read N- to C-terminus: Large ribosomal subunit protein mL44 (332 aa).

Residues 1 to 30 constitute a mitochondrion transit peptide; sequence MASGLVRLLQQGHRCLLAPVAPKLVPPVRG. The 143-residue stretch at 86–228 folds into the RNase III domain; sequence DLLKTAFVNS…LITQMTGKEL (143 aa). Positions 236-306 constitute a DRBM domain; that stretch reads NPMGLLVEEL…ARVALRKLYG (71 aa).

This sequence belongs to the ribonuclease III family. Mitochondrion-specific ribosomal protein mL44 subfamily. Component of the mitochondrial large ribosomal subunit (mt-LSU). Mature mammalian 55S mitochondrial ribosomes consist of a small (28S) and a large (39S) subunit. The 28S small subunit contains a 12S ribosomal RNA (12S mt-rRNA) and 30 different proteins. The 39S large subunit contains a 16S rRNA (16S mt-rRNA), a copy of mitochondrial valine transfer RNA (mt-tRNA(Val)), which plays an integral structural role, and 52 different proteins.

It is found in the mitochondrion. Functionally, component of the 39S subunit of mitochondrial ribosome. May have a function in the assembly/stability of nascent mitochondrial polypeptides exiting the ribosome. The chain is Large ribosomal subunit protein mL44 (MRPL44) from Homo sapiens (Human).